A 58-amino-acid polypeptide reads, in one-letter code: MVRRRRSRSPYRRRSRSRSRSGSDRSRSRYRSRSRSRSRSRSRARSRSPYHHHINQYI.

Basic residues-rich tracts occupy residues 1-19 (MVRR…RSRS) and 28-58 (SRYR…NQYI). The tract at residues 1–58 (MVRRRRSRSPYRRRSRSRSRSGSDRSRSRYRSRSRSRSRSRSRARSRSPYHHHINQYI) is disordered.

In terms of processing, probably phosphorylated in infected cells.

The protein resides in the virion. In terms of biological role, thought to be responsible for DNA condensation during packaging of the nucleocapsids. This Cryptophlebia leucotreta granulosis virus (ClGV) protein is DNA-binding protein (P7.3).